We begin with the raw amino-acid sequence, 173 residues long: Mesencephalic astrocyte-derived neurotrophic factor homolog (173 aa).

Positions M1–A22 are cleaved as a signal peptide. Cystine bridges form between C28–C114, C31–C103, C61–C72, and C148–C151.

It belongs to the ARMET family.

The protein localises to the secreted. In terms of biological role, required during the maturation of the embryonic nervous system for maintenance of neuronal and cuticular connectivity. Essential for maintenance of dopaminergic neurons and dopamine levels. This chain is Mesencephalic astrocyte-derived neurotrophic factor homolog, found in Drosophila virilis (Fruit fly).